The sequence spans 621 residues: Probable potassium transport system protein Kup 2 (621 aa).

The next 12 helical transmembrane spans lie at 12-32 (ITVAAIGVVFGDIGTSPLYAL), 52-72 (VLSLVFWAIIVLVTIKYVAII), 101-121 (WIITLLGIFAAALFYGDSMIT), 138-158 (PDLKSYVIPITLGILTGLFFI), 166-186 (VGKLFGPVMVAWFGILAILGL), 213-233 (GLAFLALGSVVLAVTGGEALY), 249-269 (FGFVMPALVLNYFGQGALLLI), 286-306 (ALIPMVGLATAATVIASQAVI), 338-358 (IYVPFTNWSLYLAVIALVIGF), 370-390 (IAVTGTMLIDTILVAFVMVLM), 396-416 (LLVALVAGTLLLVDIAFFAAN), and 420-440 (IPEGGWFPLAMGLVSFTVLTT).

The protein belongs to the HAK/KUP transporter (TC 2.A.72) family.

Its subcellular location is the cell inner membrane. It catalyses the reaction K(+)(in) + H(+)(in) = K(+)(out) + H(+)(out). In terms of biological role, transport of potassium into the cell. Likely operates as a K(+):H(+) symporter. This Dechloromonas aromatica (strain RCB) protein is Probable potassium transport system protein Kup 2.